Reading from the N-terminus, the 639-residue chain is MRMTTGQALVKFLDNQYVSFDGKEEKFVDGIFTIFGHGIVVGLGEALYENPGELKVYQGRNEQGMAHVSTAFAKQNNRRKIIACSSSVGPGAANMVTAAATATVNNIPLLLLPGDSFATRQPDPVLQQIEQSYNLGITTNDAFKPVCKYWDRINRPEQLMSAMINAMRVLTDPAETGAVCIALPQDVQGEAYDFPEYFFKKRVHRITRPLAVQEEFEEALDIIMNKKKPIIICGGGVRYSEAGEALVDFAEEFNIPICETQAGKSAIKSSHPLNLGGIGVTGNLAANMIAKDADLVIGVGTRFSDFTTSSKSLFKNPEVDFITVNVSKFHGEKMDAHKIIGDAKVCIEELQAMLEANNYESSYEDEIVNAKKAWKEEMKRLTNIKYDENFEALIKPKREGCIEEFSVLTGGLITQTAALGVIRETIDDDAIVVGAAGSLPGDLQRMWETDVRDSYHMEYGYSCMGYEIAATLGAKLAEPEREVYSMVGDGSYLMLHSEMVTAMQEQKKINILLFDNCGFGCINNLQMSNGIGSLATEFRYRDENGKLEGGLIPIDFAKVASGYGLKTYSVKTLAQLKEALEDAKKQKVSTLIDIKVLPKTMTDGYDAWWHVGIAGESKIDGVNKAFENKEKNLKAARRY.

Glu-62 is a thiamine diphosphate binding site. A thiamine pyrophosphate binding region spans residues 438 to 518; it reads SLPGDLQRMW…INILLFDNCG (81 aa). Residues Asp-489 and Asn-516 each coordinate Mg(2+).

Belongs to the TPP enzyme family. Mg(2+) is required as a cofactor. Requires thiamine diphosphate as cofactor.

The enzyme catalyses 3D-3,5/4-trihydroxycyclohexane-1,2-dione + H2O = 5-deoxy-D-glucuronate + H(+). Its pathway is polyol metabolism; myo-inositol degradation into acetyl-CoA; acetyl-CoA from myo-inositol: step 3/7. Its function is as follows. Involved in the cleavage of the C1-C2 bond of 3D-(3,5/4)-trihydroxycyclohexane-1,2-dione (THcHDO) to yield 5-deoxy-glucuronate (5DG). The polypeptide is 3D-(3,5/4)-trihydroxycyclohexane-1,2-dione hydrolase (Clostridium perfringens (strain ATCC 13124 / DSM 756 / JCM 1290 / NCIMB 6125 / NCTC 8237 / Type A)).